The following is a 185-amino-acid chain: Ribonuclease M5 (185 aa).

A Toprim domain is found at 4–87 (KEIIVVEGKD…AFLPKEEALA (84 aa)). E10, D56, and D58 together coordinate Mg(2+).

This sequence belongs to the ribonuclease M5 family. Mg(2+) is required as a cofactor.

It is found in the cytoplasm. The enzyme catalyses Endonucleolytic cleavage of RNA, removing 21 and 42 nucleotides, respectively, from the 5'- and 3'-termini of a 5S-rRNA precursor.. Functionally, required for correct processing of both the 5' and 3' ends of 5S rRNA precursor. Cleaves both sides of a double-stranded region yielding mature 5S rRNA in one step. This is Ribonuclease M5 from Bacillus anthracis.